The following is a 140-amino-acid chain: Nucleoside diphosphate kinase (140 aa).

ATP contacts are provided by lysine 11, phenylalanine 59, arginine 87, threonine 93, arginine 104, and asparagine 114. The Pros-phosphohistidine intermediate role is filled by histidine 117.

Belongs to the NDK family. As to quaternary structure, homotetramer. Mg(2+) is required as a cofactor.

It is found in the cytoplasm. It catalyses the reaction a 2'-deoxyribonucleoside 5'-diphosphate + ATP = a 2'-deoxyribonucleoside 5'-triphosphate + ADP. The catalysed reaction is a ribonucleoside 5'-diphosphate + ATP = a ribonucleoside 5'-triphosphate + ADP. In terms of biological role, major role in the synthesis of nucleoside triphosphates other than ATP. The ATP gamma phosphate is transferred to the NDP beta phosphate via a ping-pong mechanism, using a phosphorylated active-site intermediate. The sequence is that of Nucleoside diphosphate kinase from Beijerinckia indica subsp. indica (strain ATCC 9039 / DSM 1715 / NCIMB 8712).